A 273-amino-acid chain; its full sequence is Coiled-coil domain-containing protein 3 (273 aa).

An N-terminal signal peptide occupies residues 1–21; sequence MPLPLLLAALCLAASPAPARA. N100 is a glycosylation site (N-linked (GlcNAc...) asparagine). The stretch at 188–250 forms a coiled coil; it reads SVQKALFEEE…VNQKLNEKLG (63 aa).

As to quaternary structure, homodimer. In terms of processing, N-glycosylated. In terms of tissue distribution, expressed in aorta and adipose tissue. Enriched in mature adipocytes. Over-expressed in adipose tissue from either hormonally-induced or nutritionally-regulated obese mice models.

The protein resides in the secreted. In terms of biological role, negatively regulates TNF-alpha-induced pro-inflammatory response in endothelial cells (ECs) via inhibition of TNF-alpha-induced NF-kappaB activation in ECs. Positively regulates lipid accumulation in adipose cells. This chain is Coiled-coil domain-containing protein 3 (Ccdc3), found in Mus musculus (Mouse).